A 419-amino-acid chain; its full sequence is Probable G-protein coupled receptor 63 (419 aa).

The Extracellular segment spans residues 1–81 (MVFSAVLTAF…AFKSLNLPLQ (81 aa)). Asparagine 16, asparagine 28, and asparagine 62 each carry an N-linked (GlcNAc...) asparagine glycan. A helical transmembrane segment spans residues 82–104 (ITLSAIMIFILFVSFLGNLVVCL). The Cytoplasmic portion of the chain corresponds to 105–115 (MVYQKAAMRSA). Residues 116–138 (INILLASLAFADMLLAVLNMPFA) form a helical membrane-spanning segment. At 139 to 157 (LVTILTTRWIFGKFFCRVS) the chain is on the extracellular side. Residues 158 to 177 (AMFFWLFVIEGVAILLIISI) form a helical membrane-spanning segment. Residues 178–196 (DRFLIIVQRQDKLNPYRAK) are Cytoplasmic-facing. The chain crosses the membrane as a helical span at residues 197–216 (VLIAVSWATSFCVAFPLAVG). The Extracellular portion of the chain corresponds to 217–240 (NPDLQIPSRAPQCVFGYTTNPGYQ). The chain crosses the membrane as a helical span at residues 241 to 263 (AYVILISLISFFIPFLVILYSFM). Topologically, residues 264-315 (GILNTLRHNALRIHSYPEGICLSQASKLGLMSLQRPFQMSIDMGFKTRAFTT) are cytoplasmic. Residues 316-338 (ILILFAVFIVCWAPFTTYSLVAT) form a helical membrane-spanning segment. Over 339 to 352 (FSKHFYYQHNFFEI) the chain is Extracellular. Residues 353 to 375 (STWLLWLCYLKSALNPLIYYWRI) form a helical membrane-spanning segment. The Cytoplasmic portion of the chain corresponds to 376-419 (KKFHDACLDMMPKSFKFLPQLPGHTKRRIRPSAVYVCGEHRTVV).

It belongs to the G-protein coupled receptor 1 family. As to expression, expressed in brain; detected in the frontal cortex, with lower levels in the thalamus, caudate, hypothalamus and midbrain.

The protein localises to the cell membrane. Its function is as follows. Orphan receptor. May play a role in brain function. The chain is Probable G-protein coupled receptor 63 (GPR63) from Homo sapiens (Human).